A 217-amino-acid polypeptide reads, in one-letter code: Probable transaldolase (217 aa).

The Schiff-base intermediate with substrate role is filled by Lys-83.

The protein belongs to the transaldolase family. Type 3B subfamily.

The protein resides in the cytoplasm. It catalyses the reaction D-sedoheptulose 7-phosphate + D-glyceraldehyde 3-phosphate = D-erythrose 4-phosphate + beta-D-fructose 6-phosphate. It participates in carbohydrate degradation; pentose phosphate pathway; D-glyceraldehyde 3-phosphate and beta-D-fructose 6-phosphate from D-ribose 5-phosphate and D-xylulose 5-phosphate (non-oxidative stage): step 2/3. Functionally, transaldolase is important for the balance of metabolites in the pentose-phosphate pathway. The polypeptide is Probable transaldolase (tal) (Aquifex aeolicus (strain VF5)).